Reading from the N-terminus, the 393-residue chain is Arrestin-C (393 aa).

The segment covering 371–386 (FARQEDGGEEKQKALA) has biased composition (basic and acidic residues). The tract at residues 371–393 (FARQEDGGEEKQKALAEEGDEGS) is disordered.

Belongs to the arrestin family. As to quaternary structure, homodimer; disulfide-linked in response to retinal illumination. Interacts with CXCR4; the interaction is dependent on the C-terminal phosphorylation of CXCR4 and modulates the calcium ion mobilization activity of CXCR4.

Its subcellular location is the photoreceptor inner segment. It is found in the cell projection. The protein resides in the cilium. It localises to the photoreceptor outer segment. Functionally, may play a role in an as yet undefined retina-specific signal transduction. Could bind to photoactivated-phosphorylated red/green opsins. The protein is Arrestin-C (ARR3) of Ictidomys tridecemlineatus (Thirteen-lined ground squirrel).